The sequence spans 1215 residues: Zinc finger E-box-binding homeobox 2 (1215 aa).

Residues 1-111 (MKQPIMADGP…ILQASVAGPE (111 aa)) are disordered. Basic residues predominate over residues 12-24 (CKRRKQANPRRKN). A compositionally biased stretch (polar residues) spans 57–74 (DQDTSPASMPNHESSPHM). The segment covering 89 to 98 (RESVVEHSWH) has biased composition (basic and acidic residues). The residue at position 142 (S142) is a Phosphoserine. C2H2-type zinc fingers lie at residues 211 to 234 (LTCP…KYRH), 241 to 263 (FSCP…MVTH), and 282 to 304 (FKCT…LRIH). Residues 310 to 334 (YECPNCKKRFSHSGSYSSHISSKKC) form a C2H2-type 4; atypical zinc finger. Phosphoserine is present on residues S356, S360, and S364. K377 is modified (N6-acetyllysine). A Glycyl lysine isopeptide (Lys-Gly) (interchain with G-Cter in SUMO); alternate cross-link involves residue K391. K391 participates in a covalent cross-link: Glycyl lysine isopeptide (Lys-Gly) (interchain with G-Cter in SUMO2); alternate. The SMAD-MH2 binding domain stretch occupies residues 437–487 (QHLGVGMEAPLLGFPTMNSNLSEVQKVLQIVDNTVSRQKMDCKTEDISKLK). Glycyl lysine isopeptide (Lys-Gly) (interchain with G-Cter in SUMO2) cross-links involve residues K479 and K555. A C2H2-type 5; degenerate zinc finger spans residues 581 to 605 (FSCQFCKESFPGPIPLHQHERYLCK). Glycyl lysine isopeptide (Lys-Gly) (interchain with G-Cter in SUMO2) cross-links involve residues K611 and K632. The homeobox; atypical DNA-binding region spans 644–703 (GLTSPINPYKDHMSVLKAYYAMNMEPNSDELLKISIAVGLPQEFVKEWFEQRKVYQYSNS). S647 is subject to Phosphoserine. Disordered regions lie at residues 702-740 (NSRS…DSIT) and 772-811 (VDKL…SEEL). K713 participates in a covalent cross-link: Glycyl lysine isopeptide (Lys-Gly) (interchain with G-Cter in SUMO2). A phosphoserine mark is found at S731 and S780. The segment covering 780 to 808 (SNTPSPLNLSSTSSKNSHSSSYTPNSFSS) has biased composition (low complexity). The residue at position 782 (T782) is a Phosphothreonine. Residue S784 is modified to Phosphoserine. Residue K866 forms a Glycyl lysine isopeptide (Lys-Gly) (interchain with G-Cter in SUMO); alternate linkage. Residue K866 forms a Glycyl lysine isopeptide (Lys-Gly) (interchain with G-Cter in SUMO2); alternate linkage. C2H2-type zinc fingers lie at residues 999-1021 (YACD…KYEH) and 1027-1049 (HQCQ…SRLH). Residues 1055 to 1076 (YQCDKCGKRFSHSGSYSQHMNH) form a C2H2-type 8; atypical zinc finger. Positions 1117–1215 (TPQGYSDSEE…EEDNMEDGME (99 aa)) are disordered. Phosphoserine is present on residues S1122 and S1124. Over residues 1127–1149 (RESMPRDGESEKEHEKEGEEGYG) the composition is skewed to basic and acidic residues. Residues 1157-1167 (DEEEEEEEEES) show a composition bias toward acidic residues. Composition is skewed to basic and acidic residues over residues 1168-1179 (ENKSMDTDPETI) and 1186-1205 (GDHS…KSDH). S1203 is subject to Phosphoserine. The segment covering 1206–1215 (EEDNMEDGME) has biased composition (acidic residues).

Belongs to the delta-EF1/ZFH-1 C2H2-type zinc-finger family. In terms of assembly, interacts with CBX4 and CTBP1. Binds activated SMAD1, activated SMAD2 and activated SMAD3; binding with SMAD4 is not detected. Post-translationally, sumoylation on Lys-391 and Lys-866 is promoted by the E3 SUMO-protein ligase CBX4, and impairs interaction with CTBP1 and transcription repression activity.

It localises to the nucleus. It is found in the chromosome. Its function is as follows. Transcriptional inhibitor that binds to DNA sequence 5'-CACCT-3' in different promoters. Represses transcription of E-cadherin. Represses expression of MEOX2. The protein is Zinc finger E-box-binding homeobox 2 (Zeb2) of Mus musculus (Mouse).